Consider the following 292-residue polypeptide: tRNA (guanine-N(1)-)-methyltransferase (292 aa).

S-adenosyl-L-methionine contacts are provided by residues glycine 151 and 175 to 180 (IGDYVL).

This sequence belongs to the RNA methyltransferase TrmD family. As to quaternary structure, homodimer.

Its subcellular location is the cytoplasm. The catalysed reaction is guanosine(37) in tRNA + S-adenosyl-L-methionine = N(1)-methylguanosine(37) in tRNA + S-adenosyl-L-homocysteine + H(+). Specifically methylates guanosine-37 in various tRNAs. The chain is tRNA (guanine-N(1)-)-methyltransferase from Corynebacterium diphtheriae (strain ATCC 700971 / NCTC 13129 / Biotype gravis).